A 551-amino-acid chain; its full sequence is HTH-type transcriptional regulator SgrR (551 aa).

Residues 1-116 (MPSARLQQQF…LVSHLGRSFR (116 aa)) form the HTH marR-type domain. A DNA-binding region (H-T-H motif) is located at residues 26–49 (LNELAALLSCSRRHMRTLLNTMQD). Residues 163–492 (ELEADIAHHW…IDWQADAARW (330 aa)) are solute-binding.

In terms of biological role, activates the small RNA gene sgrS under glucose-phosphate stress conditions as well as yfdZ. Represses its own transcription under both stress and non-stress conditions. Might act as a sensor of the intracellular accumulation of phosphoglucose by binding these molecules in its C-terminal solute-binding domain. This chain is HTH-type transcriptional regulator SgrR, found in Shigella sonnei (strain Ss046).